Consider the following 371-residue polypeptide: MATLGCAPKDDGEGKDEGGSDRGDGDPKPKGKKEVEAHTRREADERAVRIPIPEVLQQRLADDCYYINRRRRLVRLPCQTNVGAILECYVRHFSASALASGDRRPQPQRAAPERSVGLCREMADGLRITFDHALPLVLLYPQEQAQYEMVTSSTFFFPTEERASDAGRSQEAPWPGPSPPQPSESQAMAGPTAPKRRRVETDAARAPRRSTRHSTHCHWQAEDRASPQAKRSVPKLFPHLQKTPVHSTALSPIALTPGKEGSAMFAGFEGTTEEINEILSWKLVPDNYPPGHQPPPPSYIYGAQHLLRLFVKLPEILGKMSFSEKNLKALLKHLDLFLRFLAEYQADFFLESAYVSACEAHYSSKNPRTIC.

2 disordered regions span residues 1 to 44 (MATL…READ) and 160 to 229 (EERA…SPQA). Basic and acidic residues predominate over residues 8 to 44 (PKDDGEGKDEGGSDRGDGDPKPKGKKEVEAHTRREAD). The MRG domain occupies 44–367 (DERAVRIPIP…CEAHYSSKNP (324 aa)). Over residues 206–216 (APRRSTRHSTH) the composition is skewed to basic residues.

The protein resides in the nucleus. Functionally, probable non-catalytic component of the MSL histone acetyltransferase complex, a multiprotein complex that mediates the majority of histone H4 acetylation at 'Lys-16' (H4K16ac), an epigenetic mark that prevents chromatin compaction. The sequence is that of MSL complex subunit 3B from Rattus norvegicus (Rat).